A 142-amino-acid polypeptide reads, in one-letter code: Hemoglobin subunit alpha-1/2 (142 aa).

Residues 2–142 (VLSPADKTNI…VSTVLTSKYR (141 aa)) enclose the Globin domain. At Ser4 the chain carries Phosphoserine. Lys8 carries the post-translational modification N6-succinyllysine. The residue at position 9 (Thr9) is a Phosphothreonine. Position 12 is an N6-succinyllysine (Lys12). Lys17 carries the post-translational modification N6-acetyllysine; alternate. Position 17 is an N6-succinyllysine; alternate (Lys17). Position 25 is a phosphotyrosine (Tyr25). Lys41 is subject to N6-succinyllysine. An O2-binding site is contributed by His59. His88 lines the heme b pocket. At Ser103 the chain carries Phosphoserine. Phosphothreonine is present on Thr109. Position 125 is a phosphoserine (Ser125). Phosphothreonine is present on residues Thr135 and Thr138. A Phosphoserine modification is found at Ser139.

This sequence belongs to the globin family. As to quaternary structure, heterotetramer of two alpha chains and two beta chains. Red blood cells.

Its function is as follows. Involved in oxygen transport from the lung to the various peripheral tissues. In Oryctolagus cuniculus (Rabbit), this protein is Hemoglobin subunit alpha-1/2.